Reading from the N-terminus, the 172-residue chain is Small ribosomal subunit protein uS5 (172 aa).

Residues 15-78 (LNDKLIFINR…ANAKRNLSRI (64 aa)) enclose the S5 DRBM domain.

This sequence belongs to the universal ribosomal protein uS5 family. In terms of assembly, part of the 30S ribosomal subunit. Contacts proteins S4 and S8.

Its function is as follows. With S4 and S12 plays an important role in translational accuracy. Functionally, located at the back of the 30S subunit body where it stabilizes the conformation of the head with respect to the body. This chain is Small ribosomal subunit protein uS5, found in Dehalococcoides mccartyi (strain CBDB1).